The following is a 972-amino-acid chain: Serine/threonine-protein kinase ATG1 (972 aa).

The Protein kinase domain maps to 18-319 (YVVEKEIGRG…FTEFFSNGLV (302 aa)). Residues 24-32 (IGRGSFAVV) and lysine 48 each bind ATP. The active-site Proton acceptor is the aspartate 166. 5 disordered regions span residues 359–394 (KRAS…QSDQ), 424–444 (YNNQ…SNGR), 467–506 (ALQS…HRTT), 562–605 (ASQA…SRRP), and 743–764 (DDEE…NSSG). The span at 424 to 436 (YNNQEERSNEERQ) shows a compositional bias: basic and acidic residues. Polar residues predominate over residues 562–584 (ASQALQMARHSSTSVSAANTAKQ). Residues 585–605 (TLLRRNSRTLSSSGASTSRRP) are compositionally biased toward low complexity. Residues 750-759 (EHSPGAETYR) are compositionally biased toward basic and acidic residues.

The protein belongs to the protein kinase superfamily. Ser/Thr protein kinase family. APG1/unc-51/ULK1 subfamily. Homodimer. Forms a ternary complex with ATG13 and ATG17.

It is found in the cytoplasm. The protein localises to the preautophagosomal structure membrane. It catalyses the reaction L-seryl-[protein] + ATP = O-phospho-L-seryl-[protein] + ADP + H(+). The catalysed reaction is L-threonyl-[protein] + ATP = O-phospho-L-threonyl-[protein] + ADP + H(+). Functionally, serine/threonine protein kinase involved in the cytoplasm to vacuole transport (Cvt) and found to be essential in autophagy, where it is required for the formation of autophagosomes. Involved in the clearance of protein aggregates which cannot be efficiently cleared by the proteasome. Required for selective autophagic degradation of the nucleus (nucleophagy) as well as for mitophagy which contributes to regulate mitochondrial quantity and quality by eliminating the mitochondria to a basal level to fulfill cellular energy requirements and preventing excess ROS production. Also involved in endoplasmic reticulum-specific autophagic process, in selective removal of ER-associated degradation (ERAD) substrates. Plays a key role in ATG9 and ATG23 cycling through the pre-autophagosomal structure and is necessary to promote ATG18 binding to ATG9 through phosphorylation of ATG9. Catalyzes phosphorylation of ATG4, decreasing the interaction between ATG4 and ATG8 and impairing deconjugation of PE-conjugated forms of ATG8. The polypeptide is Serine/threonine-protein kinase ATG1 (Eremothecium gossypii (strain ATCC 10895 / CBS 109.51 / FGSC 9923 / NRRL Y-1056) (Yeast)).